Reading from the N-terminus, the 343-residue chain is Probable dual-specificity RNA methyltransferase RlmN (343 aa).

Glutamate 93 serves as the catalytic Proton acceptor. The 222-residue stretch at 99-320 folds into the Radical SAM core domain; it reads TDDRATLCVS…NAKGVVCTIR (222 aa). A disulfide bond links cysteine 106 and cysteine 331. Residues cysteine 113, cysteine 117, and cysteine 120 each coordinate [4Fe-4S] cluster. Residues 158 to 159, serine 190, 212 to 214, and histidine 288 each bind S-adenosyl-L-methionine; these read GE and SLH. The active-site S-methylcysteine intermediate is the cysteine 331.

This sequence belongs to the radical SAM superfamily. RlmN family. It depends on [4Fe-4S] cluster as a cofactor.

Its subcellular location is the cytoplasm. The enzyme catalyses adenosine(2503) in 23S rRNA + 2 reduced [2Fe-2S]-[ferredoxin] + 2 S-adenosyl-L-methionine = 2-methyladenosine(2503) in 23S rRNA + 5'-deoxyadenosine + L-methionine + 2 oxidized [2Fe-2S]-[ferredoxin] + S-adenosyl-L-homocysteine. The catalysed reaction is adenosine(37) in tRNA + 2 reduced [2Fe-2S]-[ferredoxin] + 2 S-adenosyl-L-methionine = 2-methyladenosine(37) in tRNA + 5'-deoxyadenosine + L-methionine + 2 oxidized [2Fe-2S]-[ferredoxin] + S-adenosyl-L-homocysteine. Its function is as follows. Specifically methylates position 2 of adenine 2503 in 23S rRNA and position 2 of adenine 37 in tRNAs. The chain is Probable dual-specificity RNA methyltransferase RlmN from Parabacteroides distasonis (strain ATCC 8503 / DSM 20701 / CIP 104284 / JCM 5825 / NCTC 11152).